Consider the following 622-residue polypeptide: Polypeptide N-acetylgalactosaminyltransferase 6 (622 aa).

Topologically, residues 1 to 8 (MRLLRRRH) are cytoplasmic. The helical; Signal-anchor for type II membrane protein transmembrane segment at 9–28 (MSLRLAMLGSVFMLFLFIRQ) threads the bilayer. Residues 29-622 (KDVSNQEQAM…RDPYQLWLFV (594 aa)) lie on the Lumenal side of the membrane. Asparagine 86 carries N-linked (GlcNAc...) asparagine glycosylation. A catalytic subdomain A region spans residues 176–285 (LPTTSVIIVF…HGWLEPLLAR (110 aa)). The Mn(2+) site is built by aspartate 269, histidine 271, and histidine 407. Residues 348 to 410 (PIKSPTFAGG…PCSVVGHVFR (63 aa)) are catalytic subdomain B. N-linked (GlcNAc...) asparagine glycosylation is present at asparagine 476. The region spanning 506 to 622 (TNQCLDVGEN…RDPYQLWLFV (117 aa)) is the Ricin B-type lectin domain. Residues cysteine 509 and cysteine 527 are joined by a disulfide bond. 4 residues coordinate UDP-N-acetyl-alpha-D-galactosamine: aspartate 511, glutamate 514, histidine 528, and asparagine 533. Cystine bridges form between cysteine 553–cysteine 566 and cysteine 597–cysteine 610.

Belongs to the glycosyltransferase 2 family. GalNAc-T subfamily. Mn(2+) serves as cofactor.

It localises to the golgi apparatus membrane. It catalyses the reaction L-seryl-[protein] + UDP-N-acetyl-alpha-D-galactosamine = a 3-O-[N-acetyl-alpha-D-galactosaminyl]-L-seryl-[protein] + UDP + H(+). The catalysed reaction is L-threonyl-[protein] + UDP-N-acetyl-alpha-D-galactosamine = a 3-O-[N-acetyl-alpha-D-galactosaminyl]-L-threonyl-[protein] + UDP + H(+). It participates in protein modification; protein glycosylation. Catalyzes the initial reaction in O-linked oligosaccharide biosynthesis, the transfer of an N-acetyl-D-galactosamine residue to a serine or threonine residue on the protein receptor. May participate in synthesis of oncofetal fibronectin. Has activity toward Muc1a, Muc2, EA2 and fibronectin peptides. In Mus musculus (Mouse), this protein is Polypeptide N-acetylgalactosaminyltransferase 6 (Galnt6).